The primary structure comprises 244 residues: Aliphatic sulfonates import ATP-binding protein SsuB 2 (244 aa).

The ABC transporter domain occupies 13–229 (VQVRSLVRGF…ALGDSKFHEF (217 aa)). ATP is bound at residue 45-52 (GKSGSGKS).

The protein belongs to the ABC transporter superfamily. Aliphatic sulfonates importer (TC 3.A.1.17.2) family. The complex is composed of two ATP-binding proteins (SsuB), two transmembrane proteins (SsuC) and a solute-binding protein (SsuA).

It localises to the cell membrane. The enzyme catalyses ATP + H2O + aliphatic sulfonate-[sulfonate-binding protein]Side 1 = ADP + phosphate + aliphatic sulfonateSide 2 + [sulfonate-binding protein]Side 1.. In terms of biological role, part of the ABC transporter complex SsuABC involved in aliphatic sulfonates import. Responsible for energy coupling to the transport system. The chain is Aliphatic sulfonates import ATP-binding protein SsuB 2 from Rhodococcus jostii (strain RHA1).